The primary structure comprises 603 residues: Nuclear receptor subfamily 2 group C member 1 (603 aa).

The tract at residues 1 to 178 (MATIEEIAHQ…RLQRCIAFGM (178 aa)) is required for interaction with KAT2B. The nuclear receptor DNA-binding region spans 110–185 (FDLCVVCGDK…FGMKQDSVQC (76 aa)). NR C4-type zinc fingers lie at residues 113–133 (CVVC…CEGC) and 149–168 (CRGS…CQYC). A phosphoserine mark is found at Ser197 and Ser215. Residue Thr220 is modified to Phosphothreonine. Phosphothreonine; by MAPK1 is present on Thr222. A Glycyl lysine isopeptide (Lys-Gly) (interchain with G-Cter in SUMO); alternate cross-link involves residue Lys250. Lys250 is covalently cross-linked (Glycyl lysine isopeptide (Lys-Gly) (interchain with G-Cter in SUMO2); alternate). One can recognise an NR LBD domain in the interval 348–590 (GSVHLITGDS…SVIPHILKME (243 aa)). A Phosphoserine; by PKC modification is found at Ser581. Residues 584 to 603 (PHILKMEPADYNSQIIGHSI) form a required for interaction with NRIP1 region. Lys588 participates in a covalent cross-link: Glycyl lysine isopeptide (Lys-Gly) (interchain with G-Cter in SUMO2).

It belongs to the nuclear hormone receptor family. NR2 subfamily. Homodimer. Heterodimer; binds DNA as a heterodimer with NR2C2 required for chromatin remodeling and for binding to promoter regions such as globin DR1 repeats. Interacts with ESR1; the interaction prevents homodimerization of ESR1 and suppresses its transcriptional activity and cell growth. Interacts with NRIP1 (via its LXXLL motifs); the interaction provides corepressor activity. Interacts with HDAC3 (via the DNA-binding domain). Interacts with HDAC4 (via the DNA-binding domain). Interacts with PIAS1; the interaction is required for sumoylation of NR2C1. Interacts with UBE2I; the interaction is required for sumoylation of NR2C1. Interacts with KAT2B; the interaction acts as a corepressor of gene expression. Post-translationally, sumoylation requires both PIAS1 and UBE2I. Sumoylation appears to dissociate NR2C1 from the PML nuclear bodies. Enhances the interaction with NRIP1 but inhibits interaction with KAT2B. In proliferating cells, stimulation by all-trans retinoic acid, activation of MAPK1-mediated phosphorylation and recruitment to PML bodies with subsequent sumoylation, suppresses OCT4 expression. In terms of processing, phosphorylated on several serine and threonine residues. Phosphorylation on Thr-220, stimulated by all-trans retinoic acid (atRA) mediates PML location and sumoylation in proliferating cells which then modulates its association with effector molecules, KAT2B and NRIP1. Phosphorylation on Ser-581 by PKC is important for protein stability and function as activator of RARB.

It localises to the nucleus. The protein resides in the PML body. In terms of biological role, orphan nuclear receptor. Binds the IR7 element in the promoter of its own gene in an autoregulatory negative feedback mechanism. Primarily repressor of a broad range of genes. Binds to hormone response elements (HREs) consisting of two 5'-AGGTCA-3' half site direct repeat consensus sequences. Together with NR2C2, forms the core of the DRED (direct repeat erythroid-definitive) complex that represses embryonic and fetal globin transcription. Also activator of OCT4 gene expression. May be involved in stem cell proliferation and differentiation. Mediator of retinoic acid-regulated preadipocyte proliferation. The protein is Nuclear receptor subfamily 2 group C member 1 (NR2C1) of Macaca fascicularis (Crab-eating macaque).